Consider the following 1270-residue polypeptide: Glycine betaine reductase ATRR (1270 aa).

The interval 14-418 (FTQQVRASPN…MIKLRGYSVV (405 aa)) is adenylation (A) domain. A Carrier domain is found at 528 to 605 (KEDPIGIEDI…GHLDTVRAIR (78 aa)). Ser-565 bears the O-(pantetheine 4'-phosphoryl)serine mark. The segment at 643–937 (KTVLLTGVTG…EPLSWDDWVA (295 aa)) is carboxylic acid reductase domain R1. Residues 1026–1256 (PLSGKVAVVT…IYALRQPEHV (231 aa)) form an aldehyde reductase domain R2 region.

The protein belongs to the NRP synthetase family.

The tetramethylammonium ion, which mimics the head group of glycine betaine, acts as a competitive inhibitor of ATRR A domain, whereas the potency decreased by three orders of magnitude with dimethylammonium. Choline is a mixed inhibitor for both glycine betaine reductase and aldehyde reductase activity but more potent in competition against glycine betaine in the first reduction step. Therefore, choline could act as a feedback inhibitor to regulate ATRR enzymatic activity. The lowered binding affinity of choline to R2 favors the release of choline after glycine betaine aldehyde reduction to avoid direct product inhibition. Its function is as follows. NRPS-like enzyme with an unusual domain architecture that converts back glycine betaine to choline via a 2-step reduction mechanism, and thereby can be an alternative source of choline. Permits direct reutilization of endogenously stored glycine betaine for on-demand biosynthesis of choline and choline derivatives, including phospholipid phosphatidylcholine (PC) which has an essential role in maintaining membrane integrity and functionality, or choline-O-sulfate, a mean for intracellular sulfate storage. Glycine betaine is activated by the adenylation (A) domain, and transferred to the thiolation (T) domain. Movement of the phosphopantetheine arm to the thioester reductase domain R1 then allows thioester reduction by NADPH of glycine betainoyl thioester to glycine betaine aldehyde, which is in turn reduced to choline by the aldehyde reductase domain R2. In Emericella nidulans (strain FGSC A4 / ATCC 38163 / CBS 112.46 / NRRL 194 / M139) (Aspergillus nidulans), this protein is Glycine betaine reductase ATRR.